A 386-amino-acid polypeptide reads, in one-letter code: MKLTELCLKNFRNYSNLKLNFKKPIILFFGANAQGKTNLLEAIYYLATGKSHRAQKEKELIRWETSGFYLKGELEKEQAQYTLEIITNYQNGKNKNLKVNNLSQTNTRNFLKTMNVVIFSPEDLMLVKGTPDNRRRFIDQEITQVDPSYDFYLKNYFKALRQRNKLLKTYQDKNTLAQHLPPWNQQLVHYGSKIILKREEVIHKIRLLARLIYRKITNQTENLELDYSPSLEFEDCKFREQLSGEKLAHKFLNTLNENLQSDIEKRTTSIGPHRDDLIFKINNKDARQFGSQGQQRTTVLALKMAELEMIKGEKGEFPILLLDDVLSELDDNRKKHLLNLTEGRVQTFVTSTSMEDFNGDVDIKAKSQVFRIDNGEAVKLNAGNQE.

Residue 30-37 coordinates ATP; that stretch reads GANAQGKT.

The protein belongs to the RecF family.

The protein resides in the cytoplasm. Its function is as follows. The RecF protein is involved in DNA metabolism; it is required for DNA replication and normal SOS inducibility. RecF binds preferentially to single-stranded, linear DNA. It also seems to bind ATP. The sequence is that of DNA replication and repair protein RecF from Natranaerobius thermophilus (strain ATCC BAA-1301 / DSM 18059 / JW/NM-WN-LF).